Here is a 166-residue protein sequence, read N- to C-terminus: Interferon gamma (166 aa).

The signal sequence occupies residues 1–23; it reads MKYTSYILAFQLCIVLGSLGCYC. Q24 carries the pyrrolidone carboxylic acid modification. A glycan (N-linked (GlcNAc...) asparagine) is linked at N48. A glycan (N-linked (GlcNAc...) asparagine; in dimeric form) is linked at N120. The interval 147 to 166 is disordered; that stretch reads AKTGKRKRSQMLFRGRRASQ. Residues 149–166 show a composition bias toward basic residues; the sequence is TGKRKRSQMLFRGRRASQ. Residues 162–166 constitute a propeptide that is removed on maturation; sequence RRASQ.

This sequence belongs to the type II (or gamma) interferon family. Homodimer. Interacts with IFNGR1 (via extracellular domain); this interaction promotes IFNGR1 dimerization. In terms of processing, proteolytic processing produces C-terminal heterogeneity, with proteins ending alternatively at Gly-150, Met-157 or Gly-161. In terms of tissue distribution, released primarily from activated T lymphocytes.

It localises to the secreted. Type II interferon produced by immune cells such as T-cells and NK cells that plays crucial roles in antimicrobial, antiviral, and antitumor responses by activating effector immune cells and enhancing antigen presentation. Primarily signals through the JAK-STAT pathway after interaction with its receptor IFNGR1 to affect gene regulation. Upon IFNG binding, IFNGR1 intracellular domain opens out to allow association of downstream signaling components JAK2, JAK1 and STAT1, leading to STAT1 activation, nuclear translocation and transcription of IFNG-regulated genes. Many of the induced genes are transcription factors such as IRF1 that are able to further drive regulation of a next wave of transcription. Plays a role in class I antigen presentation pathway by inducing a replacement of catalytic proteasome subunits with immunoproteasome subunits. In turn, increases the quantity, quality, and repertoire of peptides for class I MHC loading. Increases the efficiency of peptide generation also by inducing the expression of activator PA28 that associates with the proteasome and alters its proteolytic cleavage preference. Up-regulates as well MHC II complexes on the cell surface by promoting expression of several key molecules such as cathepsins B/CTSB, H/CTSH, and L/CTSL. Participates in the regulation of hematopoietic stem cells during development and under homeostatic conditions by affecting their development, quiescence, and differentiation. In Homo sapiens (Human), this protein is Interferon gamma (IFNG).